A 212-amino-acid chain; its full sequence is Phosphoribosylformylglycinamidine synthase subunit PurQ (212 aa).

A Glutamine amidotransferase type-1 domain is found at 2 to 212 (RIAVLKFPGT…WLGLISWLRR (211 aa)). Residue Cys-85 is the Nucleophile of the active site. Residues His-183, Glu-185, and His-191 contribute to the active site.

Part of the FGAM synthase complex composed of 1 PurL, 1 PurQ and 2 PurS subunits.

It localises to the cytoplasm. It carries out the reaction N(2)-formyl-N(1)-(5-phospho-beta-D-ribosyl)glycinamide + L-glutamine + ATP + H2O = 2-formamido-N(1)-(5-O-phospho-beta-D-ribosyl)acetamidine + L-glutamate + ADP + phosphate + H(+). It catalyses the reaction L-glutamine + H2O = L-glutamate + NH4(+). It functions in the pathway purine metabolism; IMP biosynthesis via de novo pathway; 5-amino-1-(5-phospho-D-ribosyl)imidazole from N(2)-formyl-N(1)-(5-phospho-D-ribosyl)glycinamide: step 1/2. Part of the phosphoribosylformylglycinamidine synthase complex involved in the purines biosynthetic pathway. Catalyzes the ATP-dependent conversion of formylglycinamide ribonucleotide (FGAR) and glutamine to yield formylglycinamidine ribonucleotide (FGAM) and glutamate. The FGAM synthase complex is composed of three subunits. PurQ produces an ammonia molecule by converting glutamine to glutamate. PurL transfers the ammonia molecule to FGAR to form FGAM in an ATP-dependent manner. PurS interacts with PurQ and PurL and is thought to assist in the transfer of the ammonia molecule from PurQ to PurL. This is Phosphoribosylformylglycinamidine synthase subunit PurQ from Pyrobaculum aerophilum (strain ATCC 51768 / DSM 7523 / JCM 9630 / CIP 104966 / NBRC 100827 / IM2).